The sequence spans 443 residues: Thymidine phosphorylase (443 aa).

Belongs to the thymidine/pyrimidine-nucleoside phosphorylase family. In terms of assembly, homodimer.

The enzyme catalyses thymidine + phosphate = 2-deoxy-alpha-D-ribose 1-phosphate + thymine. It functions in the pathway pyrimidine metabolism; dTMP biosynthesis via salvage pathway; dTMP from thymine: step 1/2. Its function is as follows. The enzymes which catalyze the reversible phosphorolysis of pyrimidine nucleosides are involved in the degradation of these compounds and in their utilization as carbon and energy sources, or in the rescue of pyrimidine bases for nucleotide synthesis. This is Thymidine phosphorylase from Photobacterium profundum (strain SS9).